A 240-amino-acid polypeptide reads, in one-letter code: Uridylate kinase (240 aa).

14–17 contacts ATP; sequence KLSG. A UMP-binding site is contributed by Gly-56. Residues Gly-57 and Arg-61 each contribute to the ATP site. Residues Asp-76 and 137-144 contribute to the UMP site; that span reads TGNPFFTT. ATP-binding residues include Thr-164, Tyr-170, and Asp-173.

It belongs to the UMP kinase family. As to quaternary structure, homohexamer.

It is found in the cytoplasm. The catalysed reaction is UMP + ATP = UDP + ADP. It functions in the pathway pyrimidine metabolism; CTP biosynthesis via de novo pathway; UDP from UMP (UMPK route): step 1/1. Its activity is regulated as follows. Inhibited by UTP. In terms of biological role, catalyzes the reversible phosphorylation of UMP to UDP. This Albidiferax ferrireducens (strain ATCC BAA-621 / DSM 15236 / T118) (Rhodoferax ferrireducens) protein is Uridylate kinase.